Consider the following 352-residue polypeptide: Peptide chain release factor 1 (352 aa).

N5-methylglutamine is present on Gln229.

It belongs to the prokaryotic/mitochondrial release factor family. In terms of processing, methylated by PrmC. Methylation increases the termination efficiency of RF1.

It localises to the cytoplasm. In terms of biological role, peptide chain release factor 1 directs the termination of translation in response to the peptide chain termination codons UAG and UAA. The protein is Peptide chain release factor 1 of Gluconacetobacter diazotrophicus (strain ATCC 49037 / DSM 5601 / CCUG 37298 / CIP 103539 / LMG 7603 / PAl5).